The sequence spans 403 residues: CCA-adding enzyme (403 aa).

ATP contacts are provided by glycine 32 and arginine 35. CTP contacts are provided by glycine 32 and arginine 35. 2 residues coordinate Mg(2+): aspartate 45 and aspartate 47. 5 residues coordinate ATP: arginine 116, aspartate 159, arginine 162, arginine 165, and arginine 168. CTP-binding residues include arginine 116, aspartate 159, arginine 162, arginine 165, and arginine 168.

It belongs to the tRNA nucleotidyltransferase/poly(A) polymerase family. Bacterial CCA-adding enzyme type 3 subfamily. In terms of assembly, homodimer. It depends on Mg(2+) as a cofactor.

The enzyme catalyses a tRNA precursor + 2 CTP + ATP = a tRNA with a 3' CCA end + 3 diphosphate. It catalyses the reaction a tRNA with a 3' CCA end + 2 CTP + ATP = a tRNA with a 3' CCACCA end + 3 diphosphate. Functionally, catalyzes the addition and repair of the essential 3'-terminal CCA sequence in tRNAs without using a nucleic acid template. Adds these three nucleotides in the order of C, C, and A to the tRNA nucleotide-73, using CTP and ATP as substrates and producing inorganic pyrophosphate. tRNA 3'-terminal CCA addition is required both for tRNA processing and repair. Also involved in tRNA surveillance by mediating tandem CCA addition to generate a CCACCA at the 3' terminus of unstable tRNAs. While stable tRNAs receive only 3'-terminal CCA, unstable tRNAs are marked with CCACCA and rapidly degraded. The chain is CCA-adding enzyme from Streptococcus suis (strain 98HAH33).